The following is a 484-amino-acid chain: Palmitoyltransferase ZDHHC1 (484 aa).

2 stretches are compositionally biased toward polar residues: residues 1-11 and 19-34; these read MNICNKPSNKT and TAPS…LQGQ. Positions 1 to 38 are disordered; it reads MNICNKPSNKTAPEKSVWTAPSQDSGPSPELQGQRSRR. The Cytoplasmic portion of the chain corresponds to 1 to 49; the sequence is MNICNKPSNKTAPEKSVWTAPSQDSGPSPELQGQRSRRNGWSWPPHPLQ. The segment at 1–268 is mediates interaction with STING1; the sequence is MNICNKPSNK…GHLLCFHIYL (268 aa). Residues 50–70 form a helical membrane-spanning segment; the sequence is IVAWLLYLFFAVIGFGVLVPL. At 71–74 the chain is on the lumenal side; sequence LPHH. The helical transmembrane segment at 75–95 threads the bilayer; that stretch reads WVPAGYACMGAIFAGHLVVHL. Topologically, residues 96–182 are cytoplasmic; sequence TAVSIDPADA…YRLFLHSVAS (87 aa). A DHHC domain is found at 131 to 181; the sequence is LHCNLCDVDVSARSKHCSACNKCVCGFDHHCKWLNNCVGERNYRLFLHSVA. Residue cysteine 161 is the S-palmitoyl cysteine intermediate of the active site. A helical membrane pass occupies residues 183–203; the sequence is ALLGVLLLVLVATYVFVEFFV. Over 204 to 238 the chain is Lumenal; sequence NPMRLRTNQHFEVLKNHTDVWFVFLPAAPVETQAP. The helical transmembrane segment at 239 to 259 threads the bilayer; the sequence is AILALAALLILLGLLSTALLG. Residues 260-484 are Cytoplasmic-facing; that stretch reads HLLCFHIYLM…GTPGGGDGLP (225 aa). 2 disordered regions span residues 341–415 and 444–484; these read TQGQ…VHAG and LGAP…DGLP. The segment covering 364–374 has biased composition (basic residues); the sequence is PQKKRKRRVYR. Over residues 380 to 392 the composition is skewed to basic and acidic residues; the sequence is VLDRELPLPRLRE. Low complexity predominate over residues 395 to 415; sequence TPSRRSSSSSDSTSASPVHAG. A compositionally biased stretch (gly residues) spans 475-484; the sequence is GTPGGGDGLP.

Belongs to the DHHC palmitoyltransferase family. Interacts with STING1; ZDHHC1 constitutively interacts with STING1 and in presence of DNA viruses activates it by promoting its cGAMP-induced oligomerization and the recruitment of downstream signaling components. As to expression, expressed at high levels in fetal lung and heart. Expressed at lower levels in fetal liver and brain. Also detected in adult islet cells of pancreas, Leydig cells of testis, retina and molecular layer of cerebellum.

It is found in the endosome membrane. Its subcellular location is the endoplasmic reticulum membrane. It localises to the golgi apparatus. It carries out the reaction L-cysteinyl-[protein] + hexadecanoyl-CoA = S-hexadecanoyl-L-cysteinyl-[protein] + CoA. In terms of biological role, palmitoyltransferase that catalyzes the addition of palmitate onto various protein substrates, such as NCDN and NLRP3. Has a palmitoyltransferase activity toward NCDN and regulates NCDN association with endosome membranes through this palmitoylation. Acts as an activator of the NLRP3 inflammasome by mediating palmitoylation of 'Cys-130' and 'Cys-958' of NLRP3, thereby promoting NLRP3 phosphorylation and activation by NEK7. Functionally, also has a palmitoyltransferase activity-independent function in DNA virus-triggered and CGAS-mediated innate immune response. Functions as an activator of STING1 by promoting its cGAMP-induced oligomerization and the recruitment of downstream signaling components. In Mus musculus (Mouse), this protein is Palmitoyltransferase ZDHHC1.